The sequence spans 209 residues: Uracil phosphoribosyltransferase (209 aa).

5-phospho-alpha-D-ribose 1-diphosphate is bound by residues Arg79, Arg104, and 131–139 (DPMLATGGS). Uracil-binding positions include Ile194 and 199 to 201 (GDA). Residue Asp200 participates in 5-phospho-alpha-D-ribose 1-diphosphate binding.

Belongs to the UPRTase family. Mg(2+) is required as a cofactor.

It carries out the reaction UMP + diphosphate = 5-phospho-alpha-D-ribose 1-diphosphate + uracil. The protein operates within pyrimidine metabolism; UMP biosynthesis via salvage pathway; UMP from uracil: step 1/1. With respect to regulation, allosterically activated by GTP. Functionally, catalyzes the conversion of uracil and 5-phospho-alpha-D-ribose 1-diphosphate (PRPP) to UMP and diphosphate. In Clostridium kluyveri (strain NBRC 12016), this protein is Uracil phosphoribosyltransferase.